Consider the following 337-residue polypeptide: Ketol-acid reductoisomerase (NADP(+)) (337 aa).

Residues 3–183 (VEMFYDDDAD…GGARAGVIKT (181 aa)) enclose the KARI N-terminal Rossmann domain. NADP(+) contacts are provided by residues 26 to 29 (YGSQ), Lys49, Ser52, Ser54, and 84 to 87 (DTAQ). His109 is a catalytic residue. Residue Gly135 participates in NADP(+) binding. The KARI C-terminal knotted domain occupies 184 to 329 (TFKEETETDL…KKLRDLMSWV (146 aa)). 4 residues coordinate Mg(2+): Asp192, Glu196, Glu228, and Glu232. Residue Ser253 coordinates substrate.

It belongs to the ketol-acid reductoisomerase family. It depends on Mg(2+) as a cofactor.

The catalysed reaction is (2R)-2,3-dihydroxy-3-methylbutanoate + NADP(+) = (2S)-2-acetolactate + NADPH + H(+). It carries out the reaction (2R,3R)-2,3-dihydroxy-3-methylpentanoate + NADP(+) = (S)-2-ethyl-2-hydroxy-3-oxobutanoate + NADPH + H(+). It participates in amino-acid biosynthesis; L-isoleucine biosynthesis; L-isoleucine from 2-oxobutanoate: step 2/4. The protein operates within amino-acid biosynthesis; L-valine biosynthesis; L-valine from pyruvate: step 2/4. Involved in the biosynthesis of branched-chain amino acids (BCAA). Catalyzes an alkyl-migration followed by a ketol-acid reduction of (S)-2-acetolactate (S2AL) to yield (R)-2,3-dihydroxy-isovalerate. In the isomerase reaction, S2AL is rearranged via a Mg-dependent methyl migration to produce 3-hydroxy-3-methyl-2-ketobutyrate (HMKB). In the reductase reaction, this 2-ketoacid undergoes a metal-dependent reduction by NADPH to yield (R)-2,3-dihydroxy-isovalerate. The polypeptide is Ketol-acid reductoisomerase (NADP(+)) (Rhodococcus opacus (strain B4)).